A 246-amino-acid chain; its full sequence is Sulfate transporter CysZ (246 aa).

A run of 4 helical transmembrane segments spans residues 24–44, 69–89, 148–168, and 214–234; these read LFVL…IGFA, IVWP…FTMV, LLVL…WILF, and LLIP…ATLF.

The protein belongs to the CysZ family.

The protein localises to the cell inner membrane. Functionally, high affinity, high specificity proton-dependent sulfate transporter, which mediates sulfate uptake. Provides the sulfur source for the cysteine synthesis pathway. The sequence is that of Sulfate transporter CysZ from Pseudomonas paraeruginosa (strain DSM 24068 / PA7) (Pseudomonas aeruginosa (strain PA7)).